Consider the following 185-residue polypeptide: Dihydrofolate reductase 1 (185 aa).

Positions 8 to 185 (ELVLVVAADE…QASPRPLDDL (178 aa)) constitute a DHFR domain.

It belongs to the dihydrofolate reductase family.

The enzyme catalyses (6S)-5,6,7,8-tetrahydrofolate + NADP(+) = 7,8-dihydrofolate + NADPH + H(+). Its pathway is cofactor biosynthesis; tetrahydrofolate biosynthesis; 5,6,7,8-tetrahydrofolate from 7,8-dihydrofolate: step 1/1. In terms of biological role, key enzyme in folate metabolism. Catalyzes an essential reaction for de novo glycine and purine synthesis, and for DNA precursor synthesis. The chain is Dihydrofolate reductase 1 (folA1) from Haloarcula marismortui (strain ATCC 43049 / DSM 3752 / JCM 8966 / VKM B-1809) (Halobacterium marismortui).